The sequence spans 379 residues: Protein-glutamate methylesterase/protein-glutamine glutaminase (379 aa).

In terms of domain architecture, Response regulatory spans 4-121 (KILVVDDSIF…AANRQDAVAL (118 aa)). A 4-aspartylphosphate modification is found at aspartate 55. The region spanning 186-379 (SGKKYRCLAI…FESHILKEMA (194 aa)) is the CheB-type methylesterase domain. Catalysis depends on residues serine 198, histidine 225, and aspartate 323.

Belongs to the CheB family. Post-translationally, phosphorylated by CheA. Phosphorylation of the N-terminal regulatory domain activates the methylesterase activity.

It localises to the cytoplasm. It catalyses the reaction [protein]-L-glutamate 5-O-methyl ester + H2O = L-glutamyl-[protein] + methanol + H(+). The enzyme catalyses L-glutaminyl-[protein] + H2O = L-glutamyl-[protein] + NH4(+). Its function is as follows. Involved in chemotaxis. Part of a chemotaxis signal transduction system that modulates chemotaxis in response to various stimuli. Catalyzes the demethylation of specific methylglutamate residues introduced into the chemoreceptors (methyl-accepting chemotaxis proteins or MCP) by CheR. Also mediates the irreversible deamidation of specific glutamine residues to glutamic acid. The sequence is that of Protein-glutamate methylesterase/protein-glutamine glutaminase from Pseudoalteromonas atlantica (strain T6c / ATCC BAA-1087).